A 273-amino-acid polypeptide reads, in one-letter code: 4-hydroxy-tetrahydrodipicolinate reductase (273 aa).

Residues 12–17 (GAGGRM) and E38 each bind NAD(+). R39 serves as a coordination point for NADP(+). Residues 102–104 (GTT) and 126–129 (AANF) each bind NAD(+). H159 serves as the catalytic Proton donor/acceptor. (S)-2,3,4,5-tetrahydrodipicolinate is bound at residue H160. K163 serves as the catalytic Proton donor. 169–170 (GT) contacts (S)-2,3,4,5-tetrahydrodipicolinate.

Belongs to the DapB family. In terms of assembly, homotetramer.

The protein resides in the cytoplasm. The catalysed reaction is (S)-2,3,4,5-tetrahydrodipicolinate + NAD(+) + H2O = (2S,4S)-4-hydroxy-2,3,4,5-tetrahydrodipicolinate + NADH + H(+). The enzyme catalyses (S)-2,3,4,5-tetrahydrodipicolinate + NADP(+) + H2O = (2S,4S)-4-hydroxy-2,3,4,5-tetrahydrodipicolinate + NADPH + H(+). It participates in amino-acid biosynthesis; L-lysine biosynthesis via DAP pathway; (S)-tetrahydrodipicolinate from L-aspartate: step 4/4. Its function is as follows. Catalyzes the conversion of 4-hydroxy-tetrahydrodipicolinate (HTPA) to tetrahydrodipicolinate. The chain is 4-hydroxy-tetrahydrodipicolinate reductase from Salmonella choleraesuis (strain SC-B67).